A 249-amino-acid polypeptide reads, in one-letter code: Uridylate kinase (249 aa).

15 to 18 (KLSG) provides a ligand contact to ATP. Residues 23–28 (GDEGFG) form an involved in allosteric activation by GTP region. G57 serves as a coordination point for UMP. ATP contacts are provided by G58 and R62. Residues D77 and 138 to 145 (TGNPFFTT) contribute to the UMP site. ATP-binding residues include T165, Y171, and D174.

The protein belongs to the UMP kinase family. As to quaternary structure, homohexamer.

It is found in the cytoplasm. It catalyses the reaction UMP + ATP = UDP + ADP. The protein operates within pyrimidine metabolism; CTP biosynthesis via de novo pathway; UDP from UMP (UMPK route): step 1/1. Its activity is regulated as follows. Allosterically activated by GTP. Inhibited by UTP. Functionally, catalyzes the reversible phosphorylation of UMP to UDP. In Pseudoalteromonas translucida (strain TAC 125), this protein is Uridylate kinase.